The chain runs to 573 residues: Sterol esterase 1 (573 aa).

The Cytoplasmic portion of the chain corresponds to 1 to 12 (MGVSAVLKRARN). The stretch at 13–33 (LLATFIVCCFMAVVLVLALAH) is an intramembrane region. Topologically, residues 34-573 (HFINEHRDTR…TELEMVAEKA (540 aa)) are cytoplasmic. S315 acts as the Nucleophile in catalysis. Active-site charge relay system residues include D489 and H520.

It belongs to the AB hydrolase superfamily. In terms of processing, not N-glycosylated.

The protein localises to the lipid droplet. The protein resides in the membrane. It catalyses the reaction a sterol ester + H2O = a sterol + a fatty acid + H(+). Functionally, mediates the hydrolysis of steryl esters, thereby playing a central role in lipid metabolism. Under heme-deficient conditions, it constitutes the major steryl ester hydrolase, suggesting that it plays a central role in mobilization of steryl esters under anaerobic conditions. The polypeptide is Sterol esterase 1 (YEH1) (Saccharomyces cerevisiae (strain ATCC 204508 / S288c) (Baker's yeast)).